The following is a 367-amino-acid chain: UDP-N-acetylglucosamine--N-acetylmuramyl-(pentapeptide) pyrophosphoryl-undecaprenol N-acetylglucosamine transferase (367 aa).

Residues 15–17, Asn-127, Arg-163, Ser-191, Ile-249, and Gln-294 contribute to the UDP-N-acetyl-alpha-D-glucosamine site; that span reads TGG.

Belongs to the glycosyltransferase 28 family. MurG subfamily.

Its subcellular location is the cell inner membrane. The enzyme catalyses di-trans,octa-cis-undecaprenyl diphospho-N-acetyl-alpha-D-muramoyl-L-alanyl-D-glutamyl-meso-2,6-diaminopimeloyl-D-alanyl-D-alanine + UDP-N-acetyl-alpha-D-glucosamine = di-trans,octa-cis-undecaprenyl diphospho-[N-acetyl-alpha-D-glucosaminyl-(1-&gt;4)]-N-acetyl-alpha-D-muramoyl-L-alanyl-D-glutamyl-meso-2,6-diaminopimeloyl-D-alanyl-D-alanine + UDP + H(+). Its pathway is cell wall biogenesis; peptidoglycan biosynthesis. Its function is as follows. Cell wall formation. Catalyzes the transfer of a GlcNAc subunit on undecaprenyl-pyrophosphoryl-MurNAc-pentapeptide (lipid intermediate I) to form undecaprenyl-pyrophosphoryl-MurNAc-(pentapeptide)GlcNAc (lipid intermediate II). In Burkholderia pseudomallei (strain 668), this protein is UDP-N-acetylglucosamine--N-acetylmuramyl-(pentapeptide) pyrophosphoryl-undecaprenol N-acetylglucosamine transferase.